A 195-amino-acid polypeptide reads, in one-letter code: dITP/XTP pyrophosphatase (195 aa).

Position 8 to 13 (8 to 13 (TNNQGK)) interacts with substrate. Residues E39 and D68 each coordinate Mg(2+). D68 serves as the catalytic Proton acceptor. Residues S69, 149 to 152 (FGYD), K172, and 177 to 178 (HR) contribute to the substrate site.

Belongs to the HAM1 NTPase family. In terms of assembly, homodimer. It depends on Mg(2+) as a cofactor.

It catalyses the reaction XTP + H2O = XMP + diphosphate + H(+). It carries out the reaction dITP + H2O = dIMP + diphosphate + H(+). The enzyme catalyses ITP + H2O = IMP + diphosphate + H(+). Functionally, pyrophosphatase that catalyzes the hydrolysis of nucleoside triphosphates to their monophosphate derivatives, with a high preference for the non-canonical purine nucleotides XTP (xanthosine triphosphate), dITP (deoxyinosine triphosphate) and ITP. Seems to function as a house-cleaning enzyme that removes non-canonical purine nucleotides from the nucleotide pool, thus preventing their incorporation into DNA/RNA and avoiding chromosomal lesions. This is dITP/XTP pyrophosphatase from Staphylococcus epidermidis (strain ATCC 35984 / DSM 28319 / BCRC 17069 / CCUG 31568 / BM 3577 / RP62A).